Consider the following 430-residue polypeptide: MTVLYTSASLKKMKCLAFNMGMNCVRTVSHARSGGAKFGGRNVFNIFDSKTPDSVRIKAFKNTIYQSAMGKGKTKFSAMEINLITSLVRGYKGEGKKNAINPLQTNVQILNKLLLTHRLTDKDILEGMNLAAGPVNVAIPRDITPQEEKKKVELRNRKAENMDLHPSRKMHIKELLHSLNLDMCNDEEVYQKISLYLQKNEESRTSVGASQQNHVDIDINSLKRYLQNIEKKARQKSAIDKQKKNQARIYQWNTQSFSEIVPLSAGNILFKREPNRLWKRLQNGISVFLGSNGGGKKSKTTKKVLQGNNILLHSLENNKDMTLSNNFDHSVFNINFTDLFGVINASGSPPDRVLNEINEIELKGWKCVGNLYDNNKIVVFQSSNPLLEDTKIPQKSFTNSKRFLISLSALLASFFAYYRYRLSQRQESKK.

The transit peptide at 1–27 directs the protein to the mitochondrion; sequence MTVLYTSASLKKMKCLAFNMGMNCVRT. Residues 403–420 form a helical membrane-spanning segment; that stretch reads FLISLSALLASFFAYYRY.

Associates with the mitochondrial ribosome.

It localises to the mitochondrion. It is found in the mitochondrion membrane. In terms of biological role, component of MIOREX complexes, large expressome-like assemblies of ribosomes with factors involved in all the steps of post-transcriptional gene expression. This chain is MIOREX complex component 4, found in Saccharomyces cerevisiae (strain ATCC 204508 / S288c) (Baker's yeast).